The chain runs to 812 residues: Phosphoenolpyruvate synthase (812 aa).

The active-site Tele-phosphohistidine intermediate is H430. Positions 520, 588, 690, 711, 712, 713, and 714 each coordinate substrate. E690 is a binding site for Mg(2+). Residue D714 coordinates Mg(2+). The Proton donor role is filled by C761.

This sequence belongs to the PEP-utilizing enzyme family. Requires Mg(2+) as cofactor.

It carries out the reaction pyruvate + ATP + H2O = phosphoenolpyruvate + AMP + phosphate + 2 H(+). It functions in the pathway carbohydrate biosynthesis; gluconeogenesis. Functionally, catalyzes the phosphorylation of pyruvate to phosphoenolpyruvate. This Helicobacter pylori (strain ATCC 700392 / 26695) (Campylobacter pylori) protein is Phosphoenolpyruvate synthase (ppsA).